A 193-amino-acid polypeptide reads, in one-letter code: CDP-diacylglycerol--glycerol-3-phosphate 3-phosphatidyltransferase (193 aa).

A run of 4 helical transmembrane segments spans residues 8 to 28 (ITLA…APFD), 39 to 59 (IPVA…TDWV), 88 to 108 (AALI…IVII), and 157 to 177 (LVSF…TVVS).

It belongs to the CDP-alcohol phosphatidyltransferase class-I family.

Its subcellular location is the cell membrane. The enzyme catalyses a CDP-1,2-diacyl-sn-glycerol + sn-glycerol 3-phosphate = a 1,2-diacyl-sn-glycero-3-phospho-(1'-sn-glycero-3'-phosphate) + CMP + H(+). It functions in the pathway phospholipid metabolism; phosphatidylglycerol biosynthesis; phosphatidylglycerol from CDP-diacylglycerol: step 1/2. Its function is as follows. This protein catalyzes the committed step to the synthesis of the acidic phospholipids. This is CDP-diacylglycerol--glycerol-3-phosphate 3-phosphatidyltransferase (pgsA) from Bacillus subtilis (strain 168).